The sequence spans 428 residues: 3-phosphoshikimate 1-carboxyvinyltransferase (428 aa).

The 3-phosphoshikimate site is built by Lys-20, Ser-21, and Arg-25. Lys-20 serves as a coordination point for phosphoenolpyruvate. Residues Gly-92 and Arg-120 each coordinate phosphoenolpyruvate. 3-phosphoshikimate contacts are provided by Ser-166, Gln-168, Asp-314, and Lys-341. Gln-168 serves as a coordination point for phosphoenolpyruvate. Asp-314 functions as the Proton acceptor in the catalytic mechanism. The phosphoenolpyruvate site is built by Arg-345 and Arg-387.

This sequence belongs to the EPSP synthase family. As to quaternary structure, monomer.

It localises to the cytoplasm. It catalyses the reaction 3-phosphoshikimate + phosphoenolpyruvate = 5-O-(1-carboxyvinyl)-3-phosphoshikimate + phosphate. The protein operates within metabolic intermediate biosynthesis; chorismate biosynthesis; chorismate from D-erythrose 4-phosphate and phosphoenolpyruvate: step 6/7. Its function is as follows. Catalyzes the transfer of the enolpyruvyl moiety of phosphoenolpyruvate (PEP) to the 5-hydroxyl of shikimate-3-phosphate (S3P) to produce enolpyruvyl shikimate-3-phosphate and inorganic phosphate. In Listeria innocua serovar 6a (strain ATCC BAA-680 / CLIP 11262), this protein is 3-phosphoshikimate 1-carboxyvinyltransferase.